A 293-amino-acid polypeptide reads, in one-letter code: Elongation factor Ts (293 aa).

Positions 81–84 (TDFV) are involved in Mg(2+) ion dislocation from EF-Tu.

It belongs to the EF-Ts family.

It localises to the cytoplasm. Associates with the EF-Tu.GDP complex and induces the exchange of GDP to GTP. It remains bound to the aminoacyl-tRNA.EF-Tu.GTP complex up to the GTP hydrolysis stage on the ribosome. In Methylococcus capsulatus (strain ATCC 33009 / NCIMB 11132 / Bath), this protein is Elongation factor Ts.